Consider the following 192-residue polypeptide: BON1-associated protein 1 (192 aa).

The C2 domain occupies 1 to 119 (MIYFGRSIDN…RYSPEGHLNF (119 aa)).

Interacts with BON1 (via VWA domain), BON2 and BON3. In terms of tissue distribution, expressed in roots, leaves, stems and flowers.

It localises to the membrane. In terms of biological role, negative regulator of cell death and defense responses. Exhibits calcium-dependent phospholipid binding properties. This chain is BON1-associated protein 1 (BAP1), found in Arabidopsis thaliana (Mouse-ear cress).